A 156-amino-acid chain; its full sequence is SsrA-binding protein (156 aa).

The segment at 130–156 is disordered; that stretch reads KFDKRDDLKKKDAKRDIDRALRDKQKY. The segment covering 132–156 has biased composition (basic and acidic residues); the sequence is DKRDDLKKKDAKRDIDRALRDKQKY.

It belongs to the SmpB family.

It is found in the cytoplasm. Required for rescue of stalled ribosomes mediated by trans-translation. Binds to transfer-messenger RNA (tmRNA), required for stable association of tmRNA with ribosomes. tmRNA and SmpB together mimic tRNA shape, replacing the anticodon stem-loop with SmpB. tmRNA is encoded by the ssrA gene; the 2 termini fold to resemble tRNA(Ala) and it encodes a 'tag peptide', a short internal open reading frame. During trans-translation Ala-aminoacylated tmRNA acts like a tRNA, entering the A-site of stalled ribosomes, displacing the stalled mRNA. The ribosome then switches to translate the ORF on the tmRNA; the nascent peptide is terminated with the 'tag peptide' encoded by the tmRNA and targeted for degradation. The ribosome is freed to recommence translation, which seems to be the essential function of trans-translation. The sequence is that of SsrA-binding protein from Exiguobacterium sibiricum (strain DSM 17290 / CCUG 55495 / CIP 109462 / JCM 13490 / 255-15).